A 362-amino-acid chain; its full sequence is 3-dehydroquinate synthase (362 aa).

Residues 72–77 (DGEAHK), 106–110 (GVIGD), 130–131 (TT), Lys143, and Lys152 each bind NAD(+). Zn(2+) is bound by residues Glu185, His248, and His265.

This sequence belongs to the sugar phosphate cyclases superfamily. Dehydroquinate synthase family. The cofactor is Co(2+). It depends on Zn(2+) as a cofactor. Requires NAD(+) as cofactor.

Its subcellular location is the cytoplasm. It catalyses the reaction 7-phospho-2-dehydro-3-deoxy-D-arabino-heptonate = 3-dehydroquinate + phosphate. Its pathway is metabolic intermediate biosynthesis; chorismate biosynthesis; chorismate from D-erythrose 4-phosphate and phosphoenolpyruvate: step 2/7. In terms of biological role, catalyzes the conversion of 3-deoxy-D-arabino-heptulosonate 7-phosphate (DAHP) to dehydroquinate (DHQ). This chain is 3-dehydroquinate synthase, found in Laribacter hongkongensis (strain HLHK9).